The primary structure comprises 242 residues: Triosephosphate isomerase (242 aa).

Residue 9–11 (NWK) coordinates substrate. Residue His96 is the Electrophile of the active site. Glu165 (proton acceptor) is an active-site residue. Residues Gly171, Ser204, and 225-226 (GG) contribute to the substrate site.

This sequence belongs to the triosephosphate isomerase family. Homodimer.

It localises to the cytoplasm. It carries out the reaction D-glyceraldehyde 3-phosphate = dihydroxyacetone phosphate. It functions in the pathway carbohydrate biosynthesis; gluconeogenesis. The protein operates within carbohydrate degradation; glycolysis; D-glyceraldehyde 3-phosphate from glycerone phosphate: step 1/1. Functionally, involved in the gluconeogenesis. Catalyzes stereospecifically the conversion of dihydroxyacetone phosphate (DHAP) to D-glyceraldehyde-3-phosphate (G3P). This chain is Triosephosphate isomerase, found in Synechocystis sp. (strain ATCC 27184 / PCC 6803 / Kazusa).